Consider the following 318-residue polypeptide: L-lactate dehydrogenase (318 aa).

Residues Val17, Asp38, Lys43, Tyr69, and 83–84 each bind NAD(+); that span reads GA. 2 residues coordinate substrate: Gln86 and Arg92. Residues Ser105, 122–124, and Ser147 each bind NAD(+); that span reads ATN. Residue 124-127 coordinates substrate; it reads NPVD. 152–155 provides a ligand contact to substrate; it reads DTAR. 2 residues coordinate beta-D-fructose 1,6-bisphosphate: Lys157 and His172. Residue His179 is the Proton acceptor of the active site. Tyr223 carries the phosphotyrosine modification. Residue Thr232 participates in substrate binding.

Belongs to the LDH/MDH superfamily. LDH family. In terms of assembly, homotetramer.

It localises to the cytoplasm. The catalysed reaction is (S)-lactate + NAD(+) = pyruvate + NADH + H(+). The protein operates within fermentation; pyruvate fermentation to lactate; (S)-lactate from pyruvate: step 1/1. Its activity is regulated as follows. Allosterically activated by fructose 1,6-bisphosphate (FBP). Its function is as follows. Catalyzes the conversion of lactate to pyruvate. This chain is L-lactate dehydrogenase, found in Staphylococcus saprophyticus subsp. saprophyticus (strain ATCC 15305 / DSM 20229 / NCIMB 8711 / NCTC 7292 / S-41).